The following is a 498-amino-acid chain: Glutamate--tRNA ligase (498 aa).

The short motif at 11–21 (PSPTGHLHIGN) is the 'HIGH' region element. A 'KMSKS' region motif is present at residues 260 to 264 (KLSKR). Residue Lys-263 coordinates ATP.

Belongs to the class-I aminoacyl-tRNA synthetase family. Glutamate--tRNA ligase type 1 subfamily. As to quaternary structure, monomer.

The protein localises to the cytoplasm. The catalysed reaction is tRNA(Glu) + L-glutamate + ATP = L-glutamyl-tRNA(Glu) + AMP + diphosphate. Catalyzes the attachment of glutamate to tRNA(Glu) in a two-step reaction: glutamate is first activated by ATP to form Glu-AMP and then transferred to the acceptor end of tRNA(Glu). The sequence is that of Glutamate--tRNA ligase from Leuconostoc mesenteroides subsp. mesenteroides (strain ATCC 8293 / DSM 20343 / BCRC 11652 / CCM 1803 / JCM 6124 / NCDO 523 / NBRC 100496 / NCIMB 8023 / NCTC 12954 / NRRL B-1118 / 37Y).